The chain runs to 116 residues: Large ribosomal subunit protein uL18 (116 aa).

It belongs to the universal ribosomal protein uL18 family. Part of the 50S ribosomal subunit; part of the 5S rRNA/L5/L18/L25 subcomplex. Contacts the 5S and 23S rRNAs.

Functionally, this is one of the proteins that bind and probably mediate the attachment of the 5S RNA into the large ribosomal subunit, where it forms part of the central protuberance. The protein is Large ribosomal subunit protein uL18 of Acholeplasma laidlawii (strain PG-8A).